The primary structure comprises 422 residues: Dihydroorotase (422 aa).

Residues His-59 and His-61 each coordinate Zn(2+). Substrate-binding positions include 61–63 and Asn-93; that span reads HFR. Asp-150, His-177, and His-230 together coordinate Zn(2+). Asn-276 contacts substrate. Position 303 (Asp-303) interacts with Zn(2+). The active site involves Asp-303. Residue His-307 coordinates substrate.

The protein belongs to the metallo-dependent hydrolases superfamily. DHOase family. Class I DHOase subfamily. It depends on Zn(2+) as a cofactor.

It catalyses the reaction (S)-dihydroorotate + H2O = N-carbamoyl-L-aspartate + H(+). It functions in the pathway pyrimidine metabolism; UMP biosynthesis via de novo pathway; (S)-dihydroorotate from bicarbonate: step 3/3. Functionally, catalyzes the reversible cyclization of carbamoyl aspartate to dihydroorotate. The sequence is that of Dihydroorotase from Streptococcus pneumoniae serotype 4 (strain ATCC BAA-334 / TIGR4).